A 167-amino-acid polypeptide reads, in one-letter code: Methylated-DNA--protein-cysteine methyltransferase (167 aa).

The active-site Nucleophile; methyl group acceptor is the Cys128.

It belongs to the MGMT family.

The protein localises to the cytoplasm. It catalyses the reaction a 6-O-methyl-2'-deoxyguanosine in DNA + L-cysteinyl-[protein] = S-methyl-L-cysteinyl-[protein] + a 2'-deoxyguanosine in DNA. The catalysed reaction is a 4-O-methyl-thymidine in DNA + L-cysteinyl-[protein] = a thymidine in DNA + S-methyl-L-cysteinyl-[protein]. Its function is as follows. Involved in the cellular defense against the biological effects of O6-methylguanine (O6-MeG) and O4-methylthymine (O4-MeT) in DNA. Repairs the methylated nucleobase in DNA by stoichiometrically transferring the methyl group to a cysteine residue in the enzyme. This is a suicide reaction: the enzyme is irreversibly inactivated. The chain is Methylated-DNA--protein-cysteine methyltransferase from Methanocaldococcus jannaschii (strain ATCC 43067 / DSM 2661 / JAL-1 / JCM 10045 / NBRC 100440) (Methanococcus jannaschii).